Reading from the N-terminus, the 190-residue chain is CASP-like protein 1E2 (190 aa).

Residues 1–12 are compositionally biased toward low complexity; the sequence is MENEGKNNMNGM. The disordered stretch occupies residues 1 to 24; the sequence is MENEGKNNMNGMEMEKGKRESRSR. The Cytoplasmic portion of the chain corresponds to 1-28; sequence MENEGKNNMNGMEMEKGKRESRSRKGVE. Positions 13 to 24 are enriched in basic and acidic residues; sequence EMEKGKRESRSR. Residues 29–49 traverse the membrane as a helical segment; that stretch reads LTMRVLALVLTMAAATVLGVA. Over 50–83 the chain is Extracellular; it reads KQTKVVSIKLIPALPPLDITTTAKASYLSAFVYN. Residues 84-104 form a helical membrane-spanning segment; that stretch reads ISANAIACGYTAISIAILMIS. Residues 105–111 lie on the Cytoplasmic side of the membrane; that stretch reads RGRRSKK. The chain crosses the membrane as a helical span at residues 112 to 132; it reads LLMAVLLGDLVMVALLFSGTG. The Extracellular segment spans residues 133–163; the sequence is AASAIGLMGLQGNKHVMWNKVCGVFGKFCHR. Residues 164–184 form a helical membrane-spanning segment; that stretch reads AAPSLPLTFLAAVVFMFLVVL. Over 185 to 190 the chain is Cytoplasmic; the sequence is DAIKLP.

It belongs to the Casparian strip membrane proteins (CASP) family. In terms of assembly, homodimer and heterodimers.

Its subcellular location is the cell membrane. This Arabidopsis lyrata subsp. lyrata (Lyre-leaved rock-cress) protein is CASP-like protein 1E2.